The sequence spans 381 residues: 3-dehydroquinate synthase (381 aa).

Residues 81-86 (EGESSK), 115-119 (GVIGD), 139-140 (TS), lysine 152, and lysine 161 contribute to the NAD(+) site. Zn(2+) contacts are provided by glutamate 194, histidine 256, and histidine 274.

The protein belongs to the sugar phosphate cyclases superfamily. Dehydroquinate synthase family. Co(2+) serves as cofactor. The cofactor is Zn(2+). Requires NAD(+) as cofactor.

The protein localises to the cytoplasm. The enzyme catalyses 7-phospho-2-dehydro-3-deoxy-D-arabino-heptonate = 3-dehydroquinate + phosphate. The protein operates within metabolic intermediate biosynthesis; chorismate biosynthesis; chorismate from D-erythrose 4-phosphate and phosphoenolpyruvate: step 2/7. Functionally, catalyzes the conversion of 3-deoxy-D-arabino-heptulosonate 7-phosphate (DAHP) to dehydroquinate (DHQ). This Rhodopseudomonas palustris (strain ATCC BAA-98 / CGA009) protein is 3-dehydroquinate synthase.